The sequence spans 577 residues: Arginine--tRNA ligase (577 aa).

The short motif at 122–132 (PNVAKEMHVGH) is the 'HIGH' region element.

This sequence belongs to the class-I aminoacyl-tRNA synthetase family. As to quaternary structure, monomer.

The protein localises to the cytoplasm. The catalysed reaction is tRNA(Arg) + L-arginine + ATP = L-arginyl-tRNA(Arg) + AMP + diphosphate. This chain is Arginine--tRNA ligase, found in Klebsiella pneumoniae (strain 342).